Consider the following 482-residue polypeptide: Glutamyl-tRNA(Gln) amidotransferase subunit A (482 aa).

Residues Lys-75 and Ser-150 each act as charge relay system in the active site. Catalysis depends on Ser-174, which acts as the Acyl-ester intermediate.

The protein belongs to the amidase family. GatA subfamily. In terms of assembly, heterotrimer of A, B and C subunits.

The enzyme catalyses L-glutamyl-tRNA(Gln) + L-glutamine + ATP + H2O = L-glutaminyl-tRNA(Gln) + L-glutamate + ADP + phosphate + H(+). Its function is as follows. Allows the formation of correctly charged Gln-tRNA(Gln) through the transamidation of misacylated Glu-tRNA(Gln) in organisms which lack glutaminyl-tRNA synthetase. The reaction takes place in the presence of glutamine and ATP through an activated gamma-phospho-Glu-tRNA(Gln). This chain is Glutamyl-tRNA(Gln) amidotransferase subunit A, found in Acaryochloris marina (strain MBIC 11017).